The sequence spans 85 residues: Large ribosomal subunit protein bL31B (85 aa).

The protein belongs to the bacterial ribosomal protein bL31 family. Type B subfamily. As to quaternary structure, part of the 50S ribosomal subunit.

The chain is Large ribosomal subunit protein bL31B from Vibrio cholerae serotype O1 (strain ATCC 39541 / Classical Ogawa 395 / O395).